The chain runs to 87 residues: Phosphoribosyl-ATP pyrophosphatase (87 aa).

Belongs to the PRA-PH family.

It is found in the cytoplasm. It carries out the reaction 1-(5-phospho-beta-D-ribosyl)-ATP + H2O = 1-(5-phospho-beta-D-ribosyl)-5'-AMP + diphosphate + H(+). It functions in the pathway amino-acid biosynthesis; L-histidine biosynthesis; L-histidine from 5-phospho-alpha-D-ribose 1-diphosphate: step 2/9. This Saccharopolyspora erythraea (strain ATCC 11635 / DSM 40517 / JCM 4748 / NBRC 13426 / NCIMB 8594 / NRRL 2338) protein is Phosphoribosyl-ATP pyrophosphatase.